We begin with the raw amino-acid sequence, 200 residues long: Transcription elongation factor A protein-like 6 (200 aa).

The interval 1–200 (MEKPYNKNEG…QRGLHDIPYL (200 aa)) is disordered. A compositionally biased stretch (acidic residues) spans 20 to 36 (DEVEPDDEGKSDEEEKP). S30 is subject to Phosphoserine. 3 stretches are compositionally biased toward basic and acidic residues: residues 37 to 52 (DAEG…KAEG), 60 to 80 (LEDK…KPQG), and 115 to 154 (DRGT…EELR). S65 carries the phosphoserine modification.

The protein belongs to the TFS-II family. TFA subfamily.

Its subcellular location is the nucleus. May be involved in transcriptional regulation. This Homo sapiens (Human) protein is Transcription elongation factor A protein-like 6 (TCEAL6).